Reading from the N-terminus, the 320-residue chain is F-box protein At2g02240 (320 aa).

The region spanning 58–104 is the F-box domain; sequence TSPFDVLPEDCISNIISFTSPRDACVAASVSKTFESAVSSDCVWDKF.

This Arabidopsis thaliana (Mouse-ear cress) protein is F-box protein At2g02240.